A 473-amino-acid chain; its full sequence is Adenosylhomocysteinase (473 aa).

The substrate site is built by T64, D139, and E199. Residue T200–T202 participates in NAD(+) binding. Residues K229 and D233 each contribute to the substrate site. NAD(+) contacts are provided by residues N234, G263–G268, E286, N321, I342–H344, and N387.

The protein belongs to the adenosylhomocysteinase family. The cofactor is NAD(+).

It is found in the cytoplasm. The enzyme catalyses S-adenosyl-L-homocysteine + H2O = L-homocysteine + adenosine. The protein operates within amino-acid biosynthesis; L-homocysteine biosynthesis; L-homocysteine from S-adenosyl-L-homocysteine: step 1/1. May play a key role in the regulation of the intracellular concentration of adenosylhomocysteine. The polypeptide is Adenosylhomocysteinase (Paraburkholderia phytofirmans (strain DSM 17436 / LMG 22146 / PsJN) (Burkholderia phytofirmans)).